The sequence spans 540 residues: Chaperonin GroEL 2/3 (540 aa).

ATP is bound by residues 30-33 (TLGP), lysine 51, 87-91 (DGTTT), glycine 415, 479-481 (NAA), and aspartate 495.

The protein belongs to the chaperonin (HSP60) family. In terms of assembly, forms a cylinder of 14 subunits composed of two heptameric rings stacked back-to-back. Interacts with the co-chaperonin GroES.

Its subcellular location is the cytoplasm. It catalyses the reaction ATP + H2O + a folded polypeptide = ADP + phosphate + an unfolded polypeptide.. In terms of biological role, together with its co-chaperonin GroES, plays an essential role in assisting protein folding. The GroEL-GroES system forms a nano-cage that allows encapsulation of the non-native substrate proteins and provides a physical environment optimized to promote and accelerate protein folding. The chain is Chaperonin GroEL 2/3 from Paraburkholderia xenovorans (strain LB400).